Consider the following 513-residue polypeptide: ATP synthase subunit alpha (513 aa).

Residue 169–176 (GDRQTGKT) participates in ATP binding.

It belongs to the ATPase alpha/beta chains family. In terms of assembly, F-type ATPases have 2 components, CF(1) - the catalytic core - and CF(0) - the membrane proton channel. CF(1) has five subunits: alpha(3), beta(3), gamma(1), delta(1), epsilon(1). CF(0) has three main subunits: a(1), b(2) and c(9-12). The alpha and beta chains form an alternating ring which encloses part of the gamma chain. CF(1) is attached to CF(0) by a central stalk formed by the gamma and epsilon chains, while a peripheral stalk is formed by the delta and b chains.

The protein localises to the cell inner membrane. It carries out the reaction ATP + H2O + 4 H(+)(in) = ADP + phosphate + 5 H(+)(out). Its function is as follows. Produces ATP from ADP in the presence of a proton gradient across the membrane. The alpha chain is a regulatory subunit. The protein is ATP synthase subunit alpha of Thioalkalivibrio sulfidiphilus (strain HL-EbGR7).